A 397-amino-acid polypeptide reads, in one-letter code: Phosphoglycerate kinase (397 aa).

Substrate contacts are provided by residues 19–21 (DFN), Arg-35, 58–61 (HLGR), Arg-117, and Arg-150. Residues Lys-201, Glu-323, and 349–352 (GGDS) contribute to the ATP site.

The protein belongs to the phosphoglycerate kinase family. In terms of assembly, monomer.

The protein resides in the cytoplasm. The enzyme catalyses (2R)-3-phosphoglycerate + ATP = (2R)-3-phospho-glyceroyl phosphate + ADP. It participates in carbohydrate degradation; glycolysis; pyruvate from D-glyceraldehyde 3-phosphate: step 2/5. In Syntrophobacter fumaroxidans (strain DSM 10017 / MPOB), this protein is Phosphoglycerate kinase.